The chain runs to 87 residues: Small ribosomal subunit protein uS19m (87 aa).

It belongs to the universal ribosomal protein uS19 family.

The protein localises to the mitochondrion. The chain is Small ribosomal subunit protein uS19m (mrps19) from Dictyostelium citrinum (Slime mold).